The primary structure comprises 388 residues: Pectin acetylesterase 1 (388 aa).

A signal peptide spans 1-24 (MKTLLYWGWSSLAGLILFSILAHG). Residues Asn-30 and Asn-33 are each glycosylated (N-linked (GlcNAc...) asparagine). Residues Ser-187 and Asp-283 each act as charge relay system in the active site. Residue Asn-304 is glycosylated (N-linked (GlcNAc...) asparagine). His-349 (charge relay system) is an active-site residue.

It belongs to the pectinacetylesterase family.

It is found in the secreted. Its subcellular location is the cell wall. Its function is as follows. Hydrolyzes acetyl esters in homogalacturonan regions of pectin. In type I primary cell wall, galacturonic acid residues of pectin can be acetylated at the O-2 and O-3 positions. Decreasing the degree of acetylation of pectin gels in vitro alters their physical properties. This is Pectin acetylesterase 1 from Arabidopsis thaliana (Mouse-ear cress).